Here is a 509-residue protein sequence, read N- to C-terminus: Dihydrolipoyl dehydrogenase, mitochondrial (509 aa).

The transit peptide at 1–35 (MQSWSRVYCSLAKKGHFNRLSHGLQGASSVPLRTY) directs the protein to the mitochondrion. Lys66 is modified (N6-acetyllysine; alternate). An N6-succinyllysine; alternate modification is found at Lys66. FAD is bound by residues 71 to 80 (EKNETLGGTC) and Lys89. Residues Cys80 and Cys85 are joined by a disulfide bond. N6-acetyllysine; alternate occurs at positions 104, 122, 132, and 143. An N6-succinyllysine; alternate mark is found at Lys104, Lys122, Lys132, and Lys143. Position 154 (Gly154) interacts with FAD. Lys159 is modified (N6-succinyllysine). An FAD-binding site is contributed by 183-185 (TGS). NAD(+) is bound by residues 220-227 (GAGVIGVE) and Glu243. N6-succinyllysine occurs at positions 273 and 277. Val278 serves as a coordination point for NAD(+). Ser285 and Ser297 each carry phosphoserine. Position 314 (Gly314) interacts with NAD(+). Position 346 is an N6-acetyllysine (Lys346). Residues Asp355 and 361–364 (MLAH) contribute to the FAD site. Residue Lys410 is modified to N6-acetyllysine; alternate. Lys410 bears the N6-succinyllysine; alternate mark. An N6-acetyllysine mark is found at Lys417 and Lys420. The residue at position 430 (Lys430) is an N6-succinyllysine. Catalysis depends on His487, which acts as the Proton acceptor. A Phosphoserine modification is found at Ser502. Position 505 is an N6-acetyllysine; alternate (Lys505). The residue at position 505 (Lys505) is an N6-succinyllysine; alternate.

It belongs to the class-I pyridine nucleotide-disulfide oxidoreductase family. As to quaternary structure, homodimer. Part of the multimeric pyruvate dehydrogenase complex that contains multiple copies of pyruvate dehydrogenase (subunits PDHA (PDHA1 or PDHA2) and PDHB, E1), dihydrolipoamide acetyltransferase (DLAT, E2) and lipoamide dehydrogenase (DLD, E3). These subunits are bound to an inner core composed of about 48 DLAT and 12 PDHX molecules (by non covalent bonds). The 2-oxoglutarate dehydrogenase complex is composed of OGDH (2-oxoglutarate dehydrogenase; E1), DLST (dihydrolipoamide succinyltransferase; E2), DLD (dihydrolipoamide dehydrogenase; E3) and the assembly factor KGD4. It contains multiple copies of the three enzymatic components (E1, E2 and E3). In the nucleus, the 2-oxoglutarate dehydrogenase complex associates with KAT2A. Interacts with PDHX. FAD is required as a cofactor. Post-translationally, tyrosine phosphorylated.

It localises to the mitochondrion matrix. The protein localises to the nucleus. Its subcellular location is the cell projection. The protein resides in the cilium. It is found in the flagellum. It localises to the cytoplasmic vesicle. The protein localises to the secretory vesicle. Its subcellular location is the acrosome. The catalysed reaction is N(6)-[(R)-dihydrolipoyl]-L-lysyl-[protein] + NAD(+) = N(6)-[(R)-lipoyl]-L-lysyl-[protein] + NADH + H(+). Lipoamide dehydrogenase is a component of the glycine cleavage system as well as an E3 component of three alpha-ketoacid dehydrogenase complexes (pyruvate-, alpha-ketoglutarate-, and branched-chain amino acid-dehydrogenase complex). The 2-oxoglutarate dehydrogenase complex is mainly active in the mitochondrion. A fraction of the 2-oxoglutarate dehydrogenase complex also localizes in the nucleus and is required for lysine succinylation of histones: associates with KAT2A on chromatin and provides succinyl-CoA to histone succinyltransferase KAT2A. In monomeric form may have additional moonlighting function as serine protease. Involved in the hyperactivation of spermatazoa during capacitation and in the spermatazoal acrosome reaction. In Rattus norvegicus (Rat), this protein is Dihydrolipoyl dehydrogenase, mitochondrial (Dld).